Here is a 344-residue protein sequence, read N- to C-terminus: Heat-inducible transcription repressor HrcA (344 aa).

The protein belongs to the HrcA family.

Its function is as follows. Negative regulator of class I heat shock genes (grpE-dnaK-dnaJ and groELS operons). Prevents heat-shock induction of these operons. This Streptococcus pyogenes serotype M6 (strain ATCC BAA-946 / MGAS10394) protein is Heat-inducible transcription repressor HrcA.